A 364-amino-acid polypeptide reads, in one-letter code: Dual-specificity RNA methyltransferase RlmN (364 aa).

Glu93 (proton acceptor) is an active-site residue. The region spanning 99 to 337 (EDDRGTLCIS…ATIRKTRGDD (239 aa)) is the Radical SAM core domain. Cys106 and Cys342 form a disulfide bridge. Cys113, Cys117, and Cys120 together coordinate [4Fe-4S] cluster. S-adenosyl-L-methionine contacts are provided by residues 167–168 (GE), Ser199, 221–223 (SLH), and Asn299. Cys342 (S-methylcysteine intermediate) is an active-site residue.

It belongs to the radical SAM superfamily. RlmN family. [4Fe-4S] cluster serves as cofactor.

The protein localises to the cytoplasm. It carries out the reaction adenosine(2503) in 23S rRNA + 2 reduced [2Fe-2S]-[ferredoxin] + 2 S-adenosyl-L-methionine = 2-methyladenosine(2503) in 23S rRNA + 5'-deoxyadenosine + L-methionine + 2 oxidized [2Fe-2S]-[ferredoxin] + S-adenosyl-L-homocysteine. It catalyses the reaction adenosine(37) in tRNA + 2 reduced [2Fe-2S]-[ferredoxin] + 2 S-adenosyl-L-methionine = 2-methyladenosine(37) in tRNA + 5'-deoxyadenosine + L-methionine + 2 oxidized [2Fe-2S]-[ferredoxin] + S-adenosyl-L-homocysteine. Its function is as follows. Specifically methylates position 2 of adenine 2503 in 23S rRNA and position 2 of adenine 37 in tRNAs. m2A2503 modification seems to play a crucial role in the proofreading step occurring at the peptidyl transferase center and thus would serve to optimize ribosomal fidelity. The polypeptide is Dual-specificity RNA methyltransferase RlmN (Dichelobacter nodosus (strain VCS1703A)).